We begin with the raw amino-acid sequence, 333 residues long: Putative fimbrium anchoring subunit Fim4B (333 aa).

Positions methionine 1–glycine 20 are cleaved as a signal peptide. Residue cysteine 21 is the site of N-palmitoyl cysteine attachment. The S-diacylglycerol cysteine moiety is linked to residue cysteine 21. Residues glutamate 274–asparagine 333 form a disordered region. Positions proline 294 to glutamate 304 are enriched in basic and acidic residues. Residues aspartate 310 to aspartate 320 are compositionally biased toward gly residues.

This sequence belongs to the bacteroidetes fimbrillin superfamily. FimB/Mfa2 family.

Its subcellular location is the cell outer membrane. Its function is as follows. Putative fimbrium anchoring subunit. This is Putative fimbrium anchoring subunit Fim4B from Bacteroides ovatus (strain ATCC 8483 / DSM 1896 / JCM 5824 / BCRC 10623 / CCUG 4943 / NCTC 11153).